The chain runs to 540 residues: Chaperonin GroEL (540 aa).

Residues 29-32 (TLGP), 86-90 (DGTTT), glycine 413, 476-478 (NAA), and aspartate 492 contribute to the ATP site.

The protein belongs to the chaperonin (HSP60) family. Forms a cylinder of 14 subunits composed of two heptameric rings stacked back-to-back. Interacts with the co-chaperonin GroES.

The protein resides in the cytoplasm. It carries out the reaction ATP + H2O + a folded polypeptide = ADP + phosphate + an unfolded polypeptide.. Together with its co-chaperonin GroES, plays an essential role in assisting protein folding. The GroEL-GroES system forms a nano-cage that allows encapsulation of the non-native substrate proteins and provides a physical environment optimized to promote and accelerate protein folding. The chain is Chaperonin GroEL from Streptococcus gordonii (strain Challis / ATCC 35105 / BCRC 15272 / CH1 / DL1 / V288).